A 150-amino-acid polypeptide reads, in one-letter code: UPF0208 membrane protein VS_0999 (150 aa).

2 helical membrane passes run 42 to 62 (FGVK…MVFN) and 70 to 90 (AVVM…WLGN).

This sequence belongs to the UPF0208 family.

Its subcellular location is the cell inner membrane. This is UPF0208 membrane protein VS_0999 from Vibrio atlanticus (strain LGP32) (Vibrio splendidus (strain Mel32)).